Here is a 435-residue protein sequence, read N- to C-terminus: Secreted RxLR effector protein 35 (435 aa).

Positions 1–22 are cleaved as a signal peptide; sequence MRGAYYIIIALCVVASSQVAAG. Positions 48-65 match the RxLR-dEER motif; the sequence is RFLRGSRVVHDDLANEER. A disordered region spans residues 336–357; that stretch reads RPKRTTDGNTGTISLPTKPTKT. Over residues 342-354 the composition is skewed to polar residues; that stretch reads DGNTGTISLPTKP.

Belongs to the RxLR effector family.

The protein resides in the secreted. Its subcellular location is the host nucleus. Secreted effector that acts as an elicitor that induces cell death in host plant cells. The sequence is that of Secreted RxLR effector protein 35 from Plasmopara viticola (Downy mildew of grapevine).